The primary structure comprises 2167 residues: GTPase-activating protein BEM2/IPL2 (2167 aa).

3 disordered regions span residues 1-209 (MKGL…NDNE), 243-305 (TNYN…ASAR), and 353-372 (NSSIANENHQQKKQQTNNQA). The segment covering 12–51 (SSTASASSSSTSTSHKTTTASTASSSSPSSSSQTIRNSTS) has biased composition (low complexity). Lysine 27 is covalently cross-linked (Glycyl lysine isopeptide (Lys-Gly) (interchain with G-Cter in ubiquitin)). The segment covering 58 to 70 (HSHHHHGQGHSHH) has biased composition (basic residues). The span at 89–118 (KQYTSTSSSQVNLGMYHSDTNTRSSRSIAS) shows a compositional bias: polar residues. Residue serine 129 is modified to Phosphoserine. Positions 134 to 145 (SNSSSQKSNAQD) are enriched in polar residues. Composition is skewed to low complexity over residues 160-177 (SLLPSRSSSLSPPQSRCS) and 187-207 (NTSGISNSSGTNNNNSNNNND). Residues 243–252 (TNYNSSMTAP) are compositionally biased toward polar residues. Serine 283 is subject to Phosphoserine. Over residues 289 to 300 (SSSTTATNSGND) the composition is skewed to low complexity. Positions 592–859 (DITTLADEVH…MKLSVQHEPP (268 aa)) constitute a Ras-GEF domain. Phosphoserine occurs at positions 1012 and 1016. Threonine 1038 is subject to Phosphothreonine. A phosphoserine mark is found at serine 1046, serine 1054, and serine 1128. Positions 1771 to 1794 (ISGTHSDNDHSYNINKNTGQTPSL) are enriched in polar residues. Positions 1771–1828 (ISGTHSDNDHSYNINKNTGQTPSLGSVMESNNSARNRRDSRASFSTNRSSVVSNSSHN) are disordered. Over residues 1812-1828 (ASFSTNRSSVVSNSSHN) the composition is skewed to low complexity. A PH domain is found at 1846–1948 (GFNTSSSNYS…WIKMIKASKR (103 aa)). One can recognise a Rho-GAP domain in the interval 1967-2165 (VPLEDVCERE…DFIKNPNDYF (199 aa)).

Its function is as follows. GTPase-activating protein (GAP) for RHO1 and RHO2. Involved in the control of cellular morphogenesis. Required for proper bud site selection and bud emergence. The polypeptide is GTPase-activating protein BEM2/IPL2 (BEM2) (Saccharomyces cerevisiae (strain ATCC 204508 / S288c) (Baker's yeast)).